Here is an 88-residue protein sequence, read N- to C-terminus: Apolipoprotein C-I (88 aa).

The first 26 residues, 1–26, serve as a signal peptide directing secretion; the sequence is MRLFLSLPVLVVVLAMVLEGPAPAQA.

Belongs to the apolipoprotein C1 family.

The protein localises to the secreted. Inhibitor of lipoprotein binding to the low density lipoprotein (LDL) receptor, LDL receptor-related protein, and very low density lipoprotein (VLDL) receptor. Associates with high density lipoproteins (HDL) and the triacylglycerol-rich lipoproteins in the plasma and makes up about 10% of the protein of the VLDL and 2% of that of HDL. Appears to interfere directly with fatty acid uptake and is also the major plasma inhibitor of cholesteryl ester transfer protein (CETP). Binds free fatty acids and reduces their intracellular esterification. Modulates the interaction of APOE with beta-migrating VLDL and inhibits binding of beta-VLDL to the LDL receptor-related protein. This chain is Apolipoprotein C-I (APOC1), found in Arctocephalus gazella (Antarctic fur seal).